Here is a 382-residue protein sequence, read N- to C-terminus: Gap junction alpha-1 protein (382 aa).

The Cytoplasmic segment spans residues 2–23; sequence GDWSALGKLLDKVQAYSTAGGK. Phosphoserine is present on Ser5. A helical transmembrane segment spans residues 24-44; it reads VWLSVLFIFRILLLGTAVESA. Over 45-76 the chain is Extracellular; it reads WGDEQSAFRCNTQQPGCENVCYDKSFPISHVR. 2 disulfide bridges follow: Cys54–Cys192 and Cys187–Cys198. Residues 77-97 traverse the membrane as a helical segment; the sequence is FWVLQIIFVSVPTLLYLAHVF. Residues 98 to 155 are Cytoplasmic-facing; the sequence is YVMRKEEKLNKKEEELKVAQTDGVNVEMHLKQIEIKKFKYGIEEHGKVKMRGGLLRTY. Residue Lys144 forms a Glycyl lysine isopeptide (Lys-Gly) (interchain with G-Cter in SUMO) linkage. A helical membrane pass occupies residues 156 to 176; that stretch reads IISILFKSVFEVAFLLIQWYI. Residues 177-207 lie on the Extracellular side of the membrane; sequence YGFSLSAVYTCKRDPCPHQVDCFLSRPTEKT. The helical transmembrane segment at 208 to 228 threads the bilayer; sequence IFIIFMLVVSLVSLALNIIEL. Residues 229-382 are Cytoplasmic-facing; the sequence is FYAFFKGVKD…SRPRPDDLEI (154 aa). Lys237 is covalently cross-linked (Glycyl lysine isopeptide (Lys-Gly) (interchain with G-Cter in SUMO)). The interval 244 to 382 is interaction with NOV; the sequence is SDPYHATTGP…SRPRPDDLEI (139 aa). Tyr247 is subject to Phosphotyrosine. 3 positions are modified to phosphoserine: Ser255, Ser257, and Ser262. The interaction with UBQLN4 stretch occupies residues 264 to 382; that stretch reads KYAYFNGCSS…SRPRPDDLEI (119 aa). The residue at position 271 (Cys271) is an S-nitrosocysteine. Residue Thr275 is modified to Phosphothreonine. Residues Ser306 and Ser314 each carry the phosphoserine modification. Residues 317-332 show a composition bias toward polar residues; that stretch reads QNRMGQAGSTISNSHA. Residues 317-382 form a disordered region; sequence QNRMGQAGST…SRPRPDDLEI (66 aa). Position 325 is a phosphoserine; by CK1 (Ser325). Phosphothreonine is present on Thr326. Residues Ser328 and Ser330 each carry the phosphoserine; by CK1 modification. Basic and acidic residues predominate over residues 342–351; the sequence is QNSKKLDAGH. Ser344 and Ser365 each carry phosphoserine. The segment covering 362–374 has biased composition (low complexity); it reads RPSSRASSRASSR. A Phosphoserine; by PKC/PRKCG and PKC/PRKCD modification is found at Ser368. 2 positions are modified to phosphoserine: Ser369 and Ser373.

It belongs to the connexin family. Alpha-type (group II) subfamily. As to quaternary structure, a connexon is composed of a hexamer of connexins. Interacts with SGSM3. Interacts with RIC1/CIP150. Interacts with CNST and CSNK1D. Interacts (via C-terminus) with TJP1. Interacts (via C-terminus) with SRC (via SH3 domain). Interacts (not ubiquitinated) with UBQLN4 (via UBA domain). Interacts with NOV. Interacts with TMEM65. Interacts with ANK3/ANKG and PKP2. Phosphorylation at Ser-325, Ser-328 and Ser-330 by CK1 modulates gap junction assembly. Phosphorylated at Ser-368 by PRKCG; phosphorylation induces disassembly of gap junction plaques and inhibition of gap junction activity. Phosphorylation at Ser-368 by PRKCD triggers its internalization into small vesicles leading to proteasome-mediated degradation. In terms of processing, sumoylated with SUMO1, SUMO2 and SUMO3, which may regulate the level of functional Cx43 gap junctions at the plasma membrane. May be desumoylated by SENP1 or SENP2. Post-translationally, S-nitrosylation at Cys-271 is enriched at the muscle endothelial gap junction in arteries, it augments channel permeability and may regulate of smooth muscle cell to endothelial cell communication. Acetylated in the developing cortex; leading to delocalization from the cell membrane.

It localises to the cell membrane. The protein localises to the cell junction. The protein resides in the gap junction. It is found in the endoplasmic reticulum. Functionally, gap junction protein that acts as a regulator of bladder capacity. A gap junction consists of a cluster of closely packed pairs of transmembrane channels, the connexons, through which materials of low MW diffuse from one cell to a neighboring cell. May play a critical role in the physiology of hearing by participating in the recycling of potassium to the cochlear endolymph. Negative regulator of bladder functional capacity: acts by enhancing intercellular electrical and chemical transmission, thus sensitizing bladder muscles to cholinergic neural stimuli and causing them to contract. May play a role in cell growth inhibition through the regulation of NOV expression and localization. Plays an essential role in gap junction communication in the ventricles. This Sus scrofa (Pig) protein is Gap junction alpha-1 protein (GJA1).